The primary structure comprises 309 residues: CDK-activating kinase assembly factor MAT1 (309 aa).

An RING-type zinc finger spans residues 6–50; that stretch reads CPRCKTTKYRNPSLKLMVNVCGHTLCESCVELLFVRGSGSCQECD. Positions 142 to 161 constitute a UIM domain; sequence REQEELEEALEMEKHENEQR.

In terms of assembly, associates with CDK7 and cyclin H.

The protein resides in the nucleus. In terms of biological role, stabilizes the cyclin H-CDK7 complex to form a functional CDK-activating kinase (CAK) enzymatic complex. The sequence is that of CDK-activating kinase assembly factor MAT1 (mnat1) from Xenopus laevis (African clawed frog).